The following is a 590-amino-acid chain: UvrABC system protein C (590 aa).

The GIY-YIG domain maps to 15–92 (DLPGCYMMKD…IQKHKPYYNI (78 aa)). Residues 197-232 (SKIKKELEQKMETASENLEFERAAEIRDQIHYVEMT) form the UVR domain.

Belongs to the UvrC family. In terms of assembly, interacts with UvrB in an incision complex.

It is found in the cytoplasm. The UvrABC repair system catalyzes the recognition and processing of DNA lesions. UvrC both incises the 5' and 3' sides of the lesion. The N-terminal half is responsible for the 3' incision and the C-terminal half is responsible for the 5' incision. The chain is UvrABC system protein C from Ligilactobacillus salivarius (strain UCC118) (Lactobacillus salivarius).